We begin with the raw amino-acid sequence, 231 residues long: 7-cyano-7-deazaguanine synthase (231 aa).

Residue 8–18 (FSGGQDSTTCL) coordinates ATP. Zn(2+)-binding residues include Cys188, Cys197, Cys200, and Cys203.

It belongs to the QueC family. Zn(2+) serves as cofactor.

The catalysed reaction is 7-carboxy-7-deazaguanine + NH4(+) + ATP = 7-cyano-7-deazaguanine + ADP + phosphate + H2O + H(+). It functions in the pathway purine metabolism; 7-cyano-7-deazaguanine biosynthesis. Functionally, catalyzes the ATP-dependent conversion of 7-carboxy-7-deazaguanine (CDG) to 7-cyano-7-deazaguanine (preQ(0)). The chain is 7-cyano-7-deazaguanine synthase from Escherichia coli O127:H6 (strain E2348/69 / EPEC).